A 161-amino-acid chain; its full sequence is Large ribosomal subunit protein mL50 (161 aa).

Residues 27–51 (WGGHSKKEEKEVEENSIIPQEKKEP) are disordered.

It belongs to the mitochondrion-specific ribosomal protein mL50 family. In terms of assembly, component of the mitochondrial ribosome large subunit (39S) which comprises a 16S rRNA and about 50 distinct proteins.

The protein resides in the mitochondrion. This chain is Large ribosomal subunit protein mL50 (MRPL50), found in Gallus gallus (Chicken).